The following is a 283-amino-acid chain: Chromatin modification-related protein png1 (283 aa).

Over residues 137-171 the composition is skewed to low complexity; it reads YSPSGASSARQTPAPSRSGASTAGRRRTSATTRGA. Residues 137–224 form a disordered region; it reads YSPSGASSAR…NEMVSEEDME (88 aa). The span at 181 to 216 shows a compositional bias: polar residues; sequence YTASLADSGSTRGQKVSNATATTQLETKADSTTPNE. The segment at 228 to 277 adopts a PHD-type zinc-finger fold; that stretch reads EKYCFCQQGSYGQMVACDNANCEREWFHMECVGLKAPPEGTWYCEACRDQ. Zn(2+) contacts are provided by Cys-231, Cys-233, Cys-244, Cys-249, His-255, Cys-258, Cys-271, and Cys-274.

Belongs to the ING family. In terms of assembly, interacts with H3K4me3 and to a lesser extent with H3K4me2. Component of a histone deacetylase complex.

The protein localises to the nucleus. Component of a histone deacetylase complex responsible for the deacetylation of lysine residues on the N-terminal part of the core histones (H2A, H2B, H3 and H4). Histone deacetylation gives a tag for epigenetic repression and plays an important role in transcriptional regulation, cell cycle progression and developmental events. Has a role in silencing of mating type genes. In Schizosaccharomyces pombe (strain 972 / ATCC 24843) (Fission yeast), this protein is Chromatin modification-related protein png1 (png1).